The sequence spans 314 residues: Malate dehydrogenase (314 aa).

Residues 7 to 12 (GAGNVG) and aspartate 32 each bind NAD(+). Positions 81 and 87 each coordinate substrate. NAD(+)-binding positions include asparagine 94 and 117 to 119 (VAN). 2 residues coordinate substrate: asparagine 119 and arginine 150. Catalysis depends on histidine 174, which acts as the Proton acceptor.

It belongs to the LDH/MDH superfamily. MDH type 3 family.

It carries out the reaction (S)-malate + NAD(+) = oxaloacetate + NADH + H(+). Functionally, catalyzes the reversible oxidation of malate to oxaloacetate. This chain is Malate dehydrogenase, found in Salinibacter ruber (strain DSM 13855 / M31).